We begin with the raw amino-acid sequence, 484 residues long: Aspartyl/glutamyl-tRNA(Asn/Gln) amidotransferase subunit B (484 aa).

Belongs to the GatB/GatE family. GatB subfamily. In terms of assembly, heterotrimer of A, B and C subunits.

It carries out the reaction L-glutamyl-tRNA(Gln) + L-glutamine + ATP + H2O = L-glutaminyl-tRNA(Gln) + L-glutamate + ADP + phosphate + H(+). The enzyme catalyses L-aspartyl-tRNA(Asn) + L-glutamine + ATP + H2O = L-asparaginyl-tRNA(Asn) + L-glutamate + ADP + phosphate + 2 H(+). In terms of biological role, allows the formation of correctly charged Asn-tRNA(Asn) or Gln-tRNA(Gln) through the transamidation of misacylated Asp-tRNA(Asn) or Glu-tRNA(Gln) in organisms which lack either or both of asparaginyl-tRNA or glutaminyl-tRNA synthetases. The reaction takes place in the presence of glutamine and ATP through an activated phospho-Asp-tRNA(Asn) or phospho-Glu-tRNA(Gln). The polypeptide is Aspartyl/glutamyl-tRNA(Asn/Gln) amidotransferase subunit B (Cupriavidus metallidurans (strain ATCC 43123 / DSM 2839 / NBRC 102507 / CH34) (Ralstonia metallidurans)).